Reading from the N-terminus, the 78-residue chain is ATP synthase subunit c (78 aa).

2 consecutive transmembrane segments (helical) span residues 12 to 32 and 54 to 74; these read IGAGLACTGMGGAAVGVGHVV and FIGIAFAEALGIFSFLVALLL.

It belongs to the ATPase C chain family. In terms of assembly, F-type ATPases have 2 components, F(1) - the catalytic core - and F(0) - the membrane proton channel. F(1) has five subunits: alpha(3), beta(3), gamma(1), delta(1), epsilon(1). F(0) has four main subunits: a(1), b(1), b'(1) and c(10-14). The alpha and beta chains form an alternating ring which encloses part of the gamma chain. F(1) is attached to F(0) by a central stalk formed by the gamma and epsilon chains, while a peripheral stalk is formed by the delta, b and b' chains.

Its subcellular location is the cellular chromatophore membrane. Functionally, f(1)F(0) ATP synthase produces ATP from ADP in the presence of a proton or sodium gradient. F-type ATPases consist of two structural domains, F(1) containing the extramembraneous catalytic core and F(0) containing the membrane proton channel, linked together by a central stalk and a peripheral stalk. During catalysis, ATP synthesis in the catalytic domain of F(1) is coupled via a rotary mechanism of the central stalk subunits to proton translocation. Its function is as follows. Key component of the F(0) channel; it plays a direct role in translocation across the membrane. A homomeric c-ring of between 10-14 subunits forms the central stalk rotor element with the F(1) delta and epsilon subunits. The chain is ATP synthase subunit c from Rhodobacter capsulatus (Rhodopseudomonas capsulata).